A 402-amino-acid chain; its full sequence is Phosphoglycerate kinase (402 aa).

Substrate contacts are provided by residues 21-23, Arg-36, 59-62, Arg-114, and Arg-147; these read DLN and HLGR. Residues Lys-202, Glu-329, and 355–358 each bind ATP; that span reads GGDT.

It belongs to the phosphoglycerate kinase family. As to quaternary structure, monomer.

Its subcellular location is the cytoplasm. The catalysed reaction is (2R)-3-phosphoglycerate + ATP = (2R)-3-phospho-glyceroyl phosphate + ADP. It participates in carbohydrate degradation; glycolysis; pyruvate from D-glyceraldehyde 3-phosphate: step 2/5. The polypeptide is Phosphoglycerate kinase (Psychrobacter sp. (strain PRwf-1)).